The following is a 353-amino-acid chain: DNA-directed RNA polymerase subunit alpha (353 aa).

The tract at residues 1–234 (MVQEKVRVST…DLFIPFLHTE (234 aa)) is alpha N-terminal domain (alpha-NTD). Residues 266–353 (KKIALKSIFI…LAQSIYSESG (88 aa)) are alpha C-terminal domain (alpha-CTD).

It belongs to the RNA polymerase alpha chain family. As to quaternary structure, in plastids the minimal PEP RNA polymerase catalytic core is composed of four subunits: alpha, beta, beta', and beta''. When a (nuclear-encoded) sigma factor is associated with the core the holoenzyme is formed, which can initiate transcription.

The protein resides in the plastid. Its subcellular location is the chloroplast. The enzyme catalyses RNA(n) + a ribonucleoside 5'-triphosphate = RNA(n+1) + diphosphate. DNA-dependent RNA polymerase catalyzes the transcription of DNA into RNA using the four ribonucleoside triphosphates as substrates. The protein is DNA-directed RNA polymerase subunit alpha of Panax ginseng (Korean ginseng).